A 238-amino-acid polypeptide reads, in one-letter code: Pyridoxine 5'-phosphate synthase (238 aa).

N7 contacts 3-amino-2-oxopropyl phosphate. Residue 9 to 10 (DH) participates in 1-deoxy-D-xylulose 5-phosphate binding. Residue R18 coordinates 3-amino-2-oxopropyl phosphate. H43 acts as the Proton acceptor in catalysis. The 1-deoxy-D-xylulose 5-phosphate site is built by R45 and H50. E70 acts as the Proton acceptor in catalysis. T100 contributes to the 1-deoxy-D-xylulose 5-phosphate binding site. The Proton donor role is filled by H190. Residues G191 and 212-213 (GH) contribute to the 3-amino-2-oxopropyl phosphate site.

It belongs to the PNP synthase family. As to quaternary structure, homooctamer; tetramer of dimers.

It is found in the cytoplasm. It catalyses the reaction 3-amino-2-oxopropyl phosphate + 1-deoxy-D-xylulose 5-phosphate = pyridoxine 5'-phosphate + phosphate + 2 H2O + H(+). It participates in cofactor biosynthesis; pyridoxine 5'-phosphate biosynthesis; pyridoxine 5'-phosphate from D-erythrose 4-phosphate: step 5/5. Catalyzes the complicated ring closure reaction between the two acyclic compounds 1-deoxy-D-xylulose-5-phosphate (DXP) and 3-amino-2-oxopropyl phosphate (1-amino-acetone-3-phosphate or AAP) to form pyridoxine 5'-phosphate (PNP) and inorganic phosphate. In Prochlorococcus marinus (strain MIT 9215), this protein is Pyridoxine 5'-phosphate synthase.